Reading from the N-terminus, the 1068-residue chain is Retinoblastoma-like protein 1 (1068 aa).

Residue threonine 332 is modified to Phosphothreonine; by CDK2. Threonine 369 is subject to Phosphothreonine; by CDK4. Position 385 is a phosphothreonine; by CDK2 (threonine 385). The domain A stretch occupies residues 385 to 584; it reads TPVASATQSV…WEALQVSANK (200 aa). The segment at 385-949 is pocket; binds T and E1A; it reads TPVASATQSV…GRVKSFALKY (565 aa). The spacer stretch occupies residues 585 to 780; it reads VPTCEEVIFP…AQEVHSTGIN (196 aa). The residue at position 640 (serine 640) is a Phosphoserine; by CDK2 and CDK4. Serine 650 and serine 749 each carry phosphoserine. Phosphoserine; by CDK2 is present on serine 762. The segment at 781–949 is domain B; sequence RPKRTGSLAL…GRVKSFALKY (169 aa). Residues serine 964 and serine 975 each carry the phosphoserine; by CDK2 and CDK4 modification. A Phosphoserine; by CDK2 modification is found at serine 988. The residue at position 997 (threonine 997) is a Phosphothreonine; by CDK2. Serine 1009 carries the phosphoserine; by CDK2 modification. The residue at position 1041 (serine 1041) is a Phosphoserine.

Belongs to the retinoblastoma protein (RB) family. In terms of assembly, component of the DREAM complex (also named LINC complex) at least composed of E2F4, E2F5, LIN9, LIN37, LIN52, LIN54, MYBL1, MYBL2, RBL1, RBL2, RBBP4, TFDP1 and TFDP2. The complex exists in quiescent cells where it represses cell cycle-dependent genes. It dissociates in S phase when LIN9, LIN37, LIN52 and LIN54 form a subcomplex that binds to MYBL2. Interacts with AATF. Interacts with KDM5A. Interacts with KMT5B and KMT5C. Interacts with USP4. Interacts with RBBP9. As to quaternary structure, (Microbial infection) Interacts with SV40 and JC virus large T antigens. Large T antigen, but not E1A, binds only to the unphosphorylated form. (Microbial infection) Interacts with JC virus small t antigen. In terms of processing, cell-cycle arrest properties are inactivated by phosphorylation on Thr-332, Ser-640, Ser-964 and Ser-975 by CDK4.

The protein resides in the nucleus. Functionally, key regulator of entry into cell division. Directly involved in heterochromatin formation by maintaining overall chromatin structure and, in particular, that of constitutive heterochromatin by stabilizing histone methylation. Recruits and targets histone methyltransferases KMT5B and KMT5C, leading to epigenetic transcriptional repression. Controls histone H4 'Lys-20' trimethylation. Probably acts as a transcription repressor by recruiting chromatin-modifying enzymes to promoters. Potent inhibitor of E2F-mediated trans-activation. May act as a tumor suppressor. The polypeptide is Retinoblastoma-like protein 1 (RBL1) (Homo sapiens (Human)).